A 178-amino-acid polypeptide reads, in one-letter code: Large ribosomal subunit protein uL6 (178 aa).

The protein belongs to the universal ribosomal protein uL6 family. Part of the 50S ribosomal subunit.

This protein binds to the 23S rRNA, and is important in its secondary structure. It is located near the subunit interface in the base of the L7/L12 stalk, and near the tRNA binding site of the peptidyltransferase center. This Helicobacter pylori (strain J99 / ATCC 700824) (Campylobacter pylori J99) protein is Large ribosomal subunit protein uL6.